Reading from the N-terminus, the 72-residue chain is MSKDDVIQMQGEILENLPNATFRVKLENGHVVLGHISGKMRMHYIRILPGDKVTVELTPYDLSRARIVFRAK.

Residues 1 to 72 (MSKDDVIQMQ…SRARIVFRAK (72 aa)) enclose the S1-like domain.

It belongs to the IF-1 family. As to quaternary structure, component of the 30S ribosomal translation pre-initiation complex which assembles on the 30S ribosome in the order IF-2 and IF-3, IF-1 and N-formylmethionyl-tRNA(fMet); mRNA recruitment can occur at any time during PIC assembly.

It localises to the cytoplasm. Functionally, one of the essential components for the initiation of protein synthesis. Stabilizes the binding of IF-2 and IF-3 on the 30S subunit to which N-formylmethionyl-tRNA(fMet) subsequently binds. Helps modulate mRNA selection, yielding the 30S pre-initiation complex (PIC). Upon addition of the 50S ribosomal subunit IF-1, IF-2 and IF-3 are released leaving the mature 70S translation initiation complex. The polypeptide is Translation initiation factor IF-1 (Methylibium petroleiphilum (strain ATCC BAA-1232 / LMG 22953 / PM1)).